The sequence spans 98 residues: Large ribosomal subunit protein bL27 (98 aa).

Positions 1–11 (MASKASGGSTR) are enriched in polar residues. A disordered region spans residues 1 to 20 (MASKASGGSTRNGRDSISKR).

Belongs to the bacterial ribosomal protein bL27 family.

This chain is Large ribosomal subunit protein bL27, found in Aquifex aeolicus (strain VF5).